The following is a 207-amino-acid chain: Inhibitor of hydrogen peroxide resistance (207 aa).

The segment at residues 163-182 is a DNA-binding region (H-T-H motif); that stretch reads MNYIHQRTRVSRSVVAEVLA.

It belongs to the IprA family.

Its function is as follows. Involved in oxidative stress resistance. This is Inhibitor of hydrogen peroxide resistance from Salmonella typhimurium (strain LT2 / SGSC1412 / ATCC 700720).